The primary structure comprises 151 residues: Transcriptional repressor NrdR (151 aa).

A zinc finger lies at 3 to 34 (CPFCNAQDTKVIDSRLVSEGSQVRRRRSCNEC). The ATP-cone domain occupies 49–139 (PRLIKSDGRR…VYRSFKDVKE (91 aa)).

The protein belongs to the NrdR family. The cofactor is Zn(2+).

Negatively regulates transcription of bacterial ribonucleotide reductase nrd genes and operons by binding to NrdR-boxes. This is Transcriptional repressor NrdR from Psychromonas ingrahamii (strain DSM 17664 / CCUG 51855 / 37).